A 90-amino-acid chain; its full sequence is Probable Fe(2+)-trafficking protein (90 aa).

This sequence belongs to the Fe(2+)-trafficking protein family. As to quaternary structure, monomer.

Could be a mediator in iron transactions between iron acquisition and iron-requiring processes, such as synthesis and/or repair of Fe-S clusters in biosynthetic enzymes. The protein is Probable Fe(2+)-trafficking protein of Serratia proteamaculans (strain 568).